An 85-amino-acid polypeptide reads, in one-letter code: MNMFITVQIVIVLVLAVLSEAASLPTATERKDAMDEGPNQSDEPEGSVADPSTKDDDYSDSLKQDEKYYKVRLLNTGDKFYGLMG.

Residues 1–23 (MNMFITVQIVIVLVLAVLSEAAS) form the signal peptide. The propeptide occupies 24-74 (LPTATERKDAMDEGPNQSDEPEGSVADPSTKDDDYSDSLKQDEKYYKVRLL). A disordered region spans residues 26–61 (TATERKDAMDEGPNQSDEPEGSVADPSTKDDDYSDS). Over residues 52 to 61 (STKDDDYSDS) the composition is skewed to basic and acidic residues. Residue Met-84 is modified to Methionine amide.

Belongs to the tachykinin family. As to expression, expressed exclusively in the medial lobe of female salivary gland. Not detected in female carcass without head and salivary glands. Not detected in male tissues.

Its subcellular location is the secreted. In terms of biological role, vasodilatory peptide. Facilitates mosquito blood feeding on vertebrate host. Induces nitric oxide (NO) release in blood vessels through the activation of the nitric oxide synthase (NOS3). Enhances endothelial permeability and induces edema at the site of inoculation in the host. Induces host smooth muscle contraction. Down-regulates production of Th1 cytokines, such as IL2 and IFN-gamma (IFNG), in mouse splenocytes. Up-regulates production of Th2 cytokines, such as IL4 and IL10, in mouse splenocytes. Promotes recruitment of host leukocytes, especially neutrophils and CD8+ T cells, to the bite site. Modulates cytokine production by host macrophages. Modulates populations of monocytes/macrophages, plasmacytoid dendritic cells, B cells, CD4+ T cells, NK and NKT cells, shifting mammalian immunity towards Th2 responses. Its function is as follows. (Microbial infection) Promotes Semliki Forest virus infection in the host. Functionally, (Microbial infection) Does not affect Zika virus replication in the host. The polypeptide is Prosialokinin (Aedes aegypti (Yellowfever mosquito)).